The chain runs to 439 residues: Paraneoplastic antigen-like protein 8A (439 aa).

Residues 213 to 439 form a disordered region; sequence ETPNNWNATE…RRATNESRKV (227 aa). Residues 231–249 are compositionally biased toward basic residues; it reads LVRRAGAKSRSRRKKQKKN. Residues 403 to 419 show a composition bias toward polar residues; sequence KAPQGQQPAEATASTSR. Residues 423 to 439 are compositionally biased toward basic and acidic residues; the sequence is AKPEGSPRRATNESRKV.

Belongs to the PNMA family.

In Pongo abelii (Sumatran orangutan), this protein is Paraneoplastic antigen-like protein 8A (PNMA8A).